Here is a 198-residue protein sequence, read N- to C-terminus: Peptide methionine sulfoxide reductase MsrA 2 (198 aa).

Cys-32 is a catalytic residue.

The protein belongs to the MsrA Met sulfoxide reductase family.

It catalyses the reaction L-methionyl-[protein] + [thioredoxin]-disulfide + H2O = L-methionyl-(S)-S-oxide-[protein] + [thioredoxin]-dithiol. The enzyme catalyses [thioredoxin]-disulfide + L-methionine + H2O = L-methionine (S)-S-oxide + [thioredoxin]-dithiol. Its function is as follows. Has an important function as a repair enzyme for proteins that have been inactivated by oxidation. Catalyzes the reversible oxidation-reduction of methionine sulfoxide in proteins to methionine. This chain is Peptide methionine sulfoxide reductase MsrA 2 (msrA2), found in Rhizobium meliloti (strain 1021) (Ensifer meliloti).